Here is a 311-residue protein sequence, read N- to C-terminus: uncharacterized protein (311 aa).

Residues 168–188 form a helical membrane-spanning segment; sequence FNVMKGAILGLPIIGGIIVGV.

Its subcellular location is the cell membrane. This is an uncharacterized protein from Edwardsiella tarda.